Reading from the N-terminus, the 154-residue chain is Deoxyuridine 5'-triphosphate nucleotidohydrolase (154 aa).

Substrate is bound by residues 64 to 66, Asn-77, 81 to 83, and Lys-91; these read RSG and TID.

The protein belongs to the dUTPase family. In terms of assembly, homotrimer. The cofactor is Mg(2+).

It catalyses the reaction dUTP + H2O = dUMP + diphosphate + H(+). It functions in the pathway pyrimidine metabolism; dUMP biosynthesis; dUMP from dCTP (dUTP route): step 2/2. Its function is as follows. This enzyme is involved in nucleotide metabolism: it produces dUMP, the immediate precursor of thymidine nucleotides and it decreases the intracellular concentration of dUTP so that uracil cannot be incorporated into DNA. This chain is Deoxyuridine 5'-triphosphate nucleotidohydrolase, found in Mycobacterium bovis (strain BCG / Pasteur 1173P2).